We begin with the raw amino-acid sequence, 487 residues long: Bifunctional protein GlmU (487 aa).

The segment at 1–232 (MAVIVLAAGA…AAELAGVNDR (232 aa)) is pyrophosphorylase. Residues 6-9 (LAAG), lysine 20, glutamine 77, and 82-83 (GT) each bind UDP-N-acetyl-alpha-D-glucosamine. Aspartate 107 serves as a coordination point for Mg(2+). Positions 142, 157, 172, and 230 each coordinate UDP-N-acetyl-alpha-D-glucosamine. Residue asparagine 230 participates in Mg(2+) binding. A linker region spans residues 233-253 (VQLAAAGAELNRRTVTAAMRG). Residues 254–487 (GATIVDPATT…PTSTPQADQE (234 aa)) are N-acetyltransferase. Residues arginine 335 and lysine 353 each contribute to the UDP-N-acetyl-alpha-D-glucosamine site. Catalysis depends on histidine 365, which acts as the Proton acceptor. UDP-N-acetyl-alpha-D-glucosamine is bound by residues tyrosine 368 and asparagine 379. Residues alanine 382, 388–389 (NY), serine 407, and alanine 425 contribute to the acetyl-CoA site. Positions 453-487 (AKKRPGTPAAEAGEAAAKRVAEGGSPTSTPQADQE) are disordered. Over residues 477 to 487 (SPTSTPQADQE) the composition is skewed to polar residues.

This sequence in the N-terminal section; belongs to the N-acetylglucosamine-1-phosphate uridyltransferase family. The protein in the C-terminal section; belongs to the transferase hexapeptide repeat family. Homotrimer. Requires Mg(2+) as cofactor.

It is found in the cytoplasm. It catalyses the reaction alpha-D-glucosamine 1-phosphate + acetyl-CoA = N-acetyl-alpha-D-glucosamine 1-phosphate + CoA + H(+). It carries out the reaction N-acetyl-alpha-D-glucosamine 1-phosphate + UTP + H(+) = UDP-N-acetyl-alpha-D-glucosamine + diphosphate. Its pathway is nucleotide-sugar biosynthesis; UDP-N-acetyl-alpha-D-glucosamine biosynthesis; N-acetyl-alpha-D-glucosamine 1-phosphate from alpha-D-glucosamine 6-phosphate (route II): step 2/2. The protein operates within nucleotide-sugar biosynthesis; UDP-N-acetyl-alpha-D-glucosamine biosynthesis; UDP-N-acetyl-alpha-D-glucosamine from N-acetyl-alpha-D-glucosamine 1-phosphate: step 1/1. It participates in bacterial outer membrane biogenesis; LPS lipid A biosynthesis. In terms of biological role, catalyzes the last two sequential reactions in the de novo biosynthetic pathway for UDP-N-acetylglucosamine (UDP-GlcNAc). The C-terminal domain catalyzes the transfer of acetyl group from acetyl coenzyme A to glucosamine-1-phosphate (GlcN-1-P) to produce N-acetylglucosamine-1-phosphate (GlcNAc-1-P), which is converted into UDP-GlcNAc by the transfer of uridine 5-monophosphate (from uridine 5-triphosphate), a reaction catalyzed by the N-terminal domain. This chain is Bifunctional protein GlmU, found in Corynebacterium jeikeium (strain K411).